A 277-amino-acid chain; its full sequence is Tryptophan synthase alpha chain (277 aa).

Residues Glu43 and Glu54 each act as proton acceptor in the active site.

The protein belongs to the TrpA family. In terms of assembly, tetramer of two alpha and two beta chains.

The enzyme catalyses (1S,2R)-1-C-(indol-3-yl)glycerol 3-phosphate + L-serine = D-glyceraldehyde 3-phosphate + L-tryptophan + H2O. It participates in amino-acid biosynthesis; L-tryptophan biosynthesis; L-tryptophan from chorismate: step 5/5. Its function is as follows. The alpha subunit is responsible for the aldol cleavage of indoleglycerol phosphate to indole and glyceraldehyde 3-phosphate. This Haloferax volcanii (strain ATCC 29605 / DSM 3757 / JCM 8879 / NBRC 14742 / NCIMB 2012 / VKM B-1768 / DS2) (Halobacterium volcanii) protein is Tryptophan synthase alpha chain.